A 203-amino-acid polypeptide reads, in one-letter code: Apoptosis-associated speck-like protein containing a CARD (203 aa).

The 91-residue stretch at 1 to 91 (MAESFKEHLQ…DDLLRNTGQS (91 aa)) folds into the Pyrin domain. The 92-residue stretch at 112-203 (VAFSKVNFID…FLMDDLEDAE (92 aa)) folds into the CARD domain.

Self-associates (via pyrin and CARD domains). Interacts (via pyrin domain) with caspa (via pyrin domain). Interacts with caspb; the interaction only occurs in the presence of nlrp1. Component of NLRP1 inflammasomes. Inflammasomes are supramolecular complexes that assemble in the cytosol in response to pathogens and other damage-associated signals and play critical roles in innate immunity and inflammation. The NLRP1 inflammasome is composed of the signal sensor nlrp1, and the adapter pycard (asc), which recruit effector pro-inflammatory caspases caspa and/or caspb. The interaction between nlrp1 and pycard is required for the sequential recruitment of caspa and then caspb. Within the complex caspa is preferentially recruited first and this causes the cleavage of pro-il1b into the midformed il1b. This is followed by the recruitment of caspb, which is activated and cleaves the midformed il1b resulting in il1b maturation. Interacts (via pyrin domain) with NLP3X1 (via pyrin domain). Interacts with gbp4. In terms of tissue distribution, expressed in the kidney, intestine and gill. Expressed at low levels in the heart.

It localises to the cytoplasm. It is found in the inflammasome. Functions as a key mediator in apoptosis and inflammation. Promotes caspase-mediated apoptosis. Induces proteolytic processing of caspa and caspa-dependent apoptosis. Involved in innate immune response by acting as an integral adapter in the assembly of various inflammasomes which recruit and activate caspase-1 leading to processing and secretion of pro-inflammatory cytokines. Caspase-1-dependent inflammation leads to macrophage pyroptosis, a form of cell death. The function as activating adapter in different types of inflammasomes is mediated by the pyrin and CARD domains and their homotypic interactions. Clustered PYCARD nucleates the formation of caspase-1 filaments through the interaction of their respective CARD domains, acting as a platform for of caspase-1 polymerization. Also involved in transcriptional activation of cytokines and chemokines independent of the inflammasome. In Danio rerio (Zebrafish), this protein is Apoptosis-associated speck-like protein containing a CARD (pycard).